The chain runs to 245 residues: 14-3-3 protein theta (245 aa).

It belongs to the 14-3-3 family. As to quaternary structure, homodimer, and heterodimer with other family members.

The protein localises to the cytoplasm. In terms of biological role, adapter protein implicated in the regulation of a large spectrum of both general and specialized signaling pathways. Binds to a large number of partners, usually by recognition of a phosphoserine or phosphothreonine motif. Binding generally results in the modulation of the activity of the binding partner. In Gallus gallus (Chicken), this protein is 14-3-3 protein theta (YWHAQ).